The primary structure comprises 80 residues: Cell division protein ZapB (80 aa).

Positions 3-80 (LEILEQLEAK…GLLGKMEEVE (78 aa)) form a coiled coil. A disordered region spans residues 41-62 (LEQANNGRSEVEQEAQKARDEQ). Positions 49–62 (SEVEQEAQKARDEQ) are enriched in basic and acidic residues.

This sequence belongs to the ZapB family. Homodimer. The ends of the coiled-coil dimer bind to each other, forming polymers. Interacts with FtsZ.

The protein resides in the cytoplasm. In terms of biological role, non-essential, abundant cell division factor that is required for proper Z-ring formation. It is recruited early to the divisome by direct interaction with FtsZ, stimulating Z-ring assembly and thereby promoting cell division earlier in the cell cycle. Its recruitment to the Z-ring requires functional FtsA or ZipA. The polypeptide is Cell division protein ZapB (Aliivibrio salmonicida (strain LFI1238) (Vibrio salmonicida (strain LFI1238))).